Consider the following 158-residue polypeptide: MTQEPGYTRLQITLHWAIAGLVLFNYIFGETMERAYDAVRQNVEPAGVGHYLHVVVGLAVLVLTLVRIGARFVLGVPEKGTTPGDKVAAGLQGLLYLLTLLVPALGMTAWGGGQAWAAGPHVLAANAIMLLALVHAVSALFHQYVLKDRLLLRMMRPR.

The next 4 helical transmembrane spans lie at isoleucine 12–methionine 32, alanine 46–valine 66, valine 87–methionine 107, and histidine 121–phenylalanine 141. The heme b site is built by histidine 15 and histidine 53. The heme b site is built by histidine 121 and histidine 135.

The protein belongs to the cytochrome b561 family. Homodimer. Heme b is required as a cofactor.

The protein resides in the cell membrane. Functionally, cytochrome b562 is an integral component of the cytochrome b-c1 complex in the cyclic electron transfer system of photosynthetic bacteria. The sequence is that of Cytochrome b562 from Cereibacter sphaeroides (strain ATCC 17023 / DSM 158 / JCM 6121 / CCUG 31486 / LMG 2827 / NBRC 12203 / NCIMB 8253 / ATH 2.4.1.) (Rhodobacter sphaeroides).